Here is a 451-residue protein sequence, read N- to C-terminus: Chromosomal replication initiator protein DnaA 2 (451 aa).

Positions 1 to 68 (MQAWEEFLKA…QQKFINGNNK (68 aa)) are domain I, interacts with DnaA modulators. The domain II stretch occupies residues 68–104 (KRIKIHLSVANTPQRAKKTKTANKEKDFKAPFELTFD). Positions 105-326 (ELDPLCLFPY…KGLEALVLRL (222 aa)) are domain III, AAA+ region. 4 residues coordinate ATP: glycine 156, glycine 158, lysine 159, and threonine 160. The interval 327–451 (HLDAKHSITA…CHIILKKLQG (125 aa)) is domain IV, binds dsDNA.

This sequence belongs to the DnaA family. As to quaternary structure, oligomerizes as a right-handed, spiral filament on DNA at oriC.

The protein localises to the cytoplasm. In terms of biological role, plays an essential role in the initiation and regulation of chromosomal replication. ATP-DnaA binds to the origin of replication (oriC) to initiate formation of the DNA replication initiation complex once per cell cycle. Binds the DnaA box (a 9 base pair repeat at the origin) and separates the double-stranded (ds)DNA. Forms a right-handed helical filament on oriC DNA; dsDNA binds to the exterior of the filament while single-stranded (ss)DNA is stabiized in the filament's interior. The ATP-DnaA-oriC complex binds and stabilizes one strand of the AT-rich DNA unwinding element (DUE), permitting loading of DNA polymerase. After initiation quickly degrades to an ADP-DnaA complex that is not apt for DNA replication. Binds acidic phospholipids. The protein is Chromosomal replication initiator protein DnaA 2 of Protochlamydia amoebophila (strain UWE25).